A 517-amino-acid chain; its full sequence is MKLFWVKRLLRISTVVVTLLLLQRTNAAIPDCDYYDTVDISAAQKLPNGSYLFEGLLVPANLTAEYEFTILPDDSKQKVDKHIRGCVCKLKPCVRFCCPHNHIMDMNVCAGDMTEEELEVLDPFLNVTLDDGSVVRRHFKKELIVQWDLPMSCDGMFSLDNREKTDQYTLFENGSFFRHHDRVTLNKREYCLQHLTFVDGNESSIRIAPHNCLISPSRMGQTVVMITSLVCMVLTITVYLFVKKLQNLHGKCFMCYMVCLFMAYLLLLLNLWQMSQNFCITAGFLGYFFVMAAFLWLSVISLHLWNTFSGSAHNANRFLSEHRFLAYNTYAWGMAVVLTGITYLADKVVENEDWNPRMGFGGHCWICTQSWSAMLYFYGPMVFLIAFNITMFILTANRIIGVKKDIQKFAHRQERKQKLNSDKQTYTFFLRLFIIMGLTWSLEIGSYISQFNQTWSNVFLVADYLNWSQGIIIFILFVLKRSTLRLLMESIRGEGEEVNDSEEEISLENTKYDRNVL.

Residues 1-27 form the signal peptide; sequence MKLFWVKRLLRISTVVVTLLLLQRTNA. The Extracellular portion of the chain corresponds to 28–221; the sequence is AIPDCDYYDT…CLISPSRMGQ (194 aa). 5 disulfide bridges follow: Cys-32–Cys-86, Cys-88–Cys-93, Cys-97–Cys-191, Cys-98–Cys-109, and Cys-153–Cys-212. Residues Asn-48 and Asn-61 are each glycosylated (N-linked (GlcNAc...) asparagine). N-linked (GlcNAc...) asparagine glycans are attached at residues Asn-126, Asn-173, and Asn-201. A helical transmembrane segment spans residues 222–242; that stretch reads TVVMITSLVCMVLTITVYLFV. Topologically, residues 243 to 251 are cytoplasmic; the sequence is KKLQNLHGK. A helical membrane pass occupies residues 252 to 272; that stretch reads CFMCYMVCLFMAYLLLLLNLW. At 273–279 the chain is on the extracellular side; that stretch reads QMSQNFC. A helical membrane pass occupies residues 280-300; it reads ITAGFLGYFFVMAAFLWLSVI. The Cytoplasmic segment spans residues 301 to 323; it reads SLHLWNTFSGSAHNANRFLSEHR. Residues 324–344 form a helical membrane-spanning segment; that stretch reads FLAYNTYAWGMAVVLTGITYL. Residues 345–373 are Extracellular-facing; it reads ADKVVENEDWNPRMGFGGHCWICTQSWSA. A helical transmembrane segment spans residues 374–394; it reads MLYFYGPMVFLIAFNITMFIL. The Cytoplasmic segment spans residues 395 to 427; the sequence is TANRIIGVKKDIQKFAHRQERKQKLNSDKQTYT. Residues 428-448 traverse the membrane as a helical segment; sequence FFLRLFIIMGLTWSLEIGSYI. The Extracellular portion of the chain corresponds to 449–457; it reads SQFNQTWSN. Residue Asn-452 is glycosylated (N-linked (GlcNAc...) asparagine). A helical transmembrane segment spans residues 458-478; sequence VFLVADYLNWSQGIIIFILFV. The Cytoplasmic portion of the chain corresponds to 479 to 517; it reads LKRSTLRLLMESIRGEGEEVNDSEEEISLENTKYDRNVL.

Belongs to the G-protein coupled receptor 2 family. Mth subfamily. As to quaternary structure, homodimer.

The protein resides in the cell membrane. Functionally, involved in biological aging and stress response. Essential for adult survival. The sequence is that of G-protein coupled receptor Mth (mth) from Drosophila yakuba (Fruit fly).